Consider the following 231-residue polypeptide: uncharacterized protein (231 aa).

4 consecutive transmembrane segments (helical) span residues 39 to 59 (FCISVISFFLLAIITLTYGPF), 70 to 90 (ALSLYFINVIMGVTYLSVPVI), 156 to 176 (AIISILCLSYSAICIVNGGSI), and 189 to 206 (IVAIMFFILYTSLMNMFF).

This sequence belongs to the FliR/MopE/SpaR family.

It localises to the cell membrane. This is an uncharacterized protein from Escherichia coli (strain K12).